The chain runs to 289 residues: Pantothenate synthetase (289 aa).

30–37 is a binding site for ATP; the sequence is MGYLHKGH. His37 functions as the Proton donor in the catalytic mechanism. (R)-pantoate is bound at residue Gln61. Gln61 is a binding site for beta-alanine. Position 147–150 (147–150) interacts with ATP; it reads GEKD. Gln153 serves as a coordination point for (R)-pantoate. ATP-binding positions include Val176 and 184-187; that span reads CSSR.

It belongs to the pantothenate synthetase family. In terms of assembly, homodimer.

The protein resides in the cytoplasm. It carries out the reaction (R)-pantoate + beta-alanine + ATP = (R)-pantothenate + AMP + diphosphate + H(+). It participates in cofactor biosynthesis; (R)-pantothenate biosynthesis; (R)-pantothenate from (R)-pantoate and beta-alanine: step 1/1. Its function is as follows. Catalyzes the condensation of pantoate with beta-alanine in an ATP-dependent reaction via a pantoyl-adenylate intermediate. This Brucella anthropi (strain ATCC 49188 / DSM 6882 / CCUG 24695 / JCM 21032 / LMG 3331 / NBRC 15819 / NCTC 12168 / Alc 37) (Ochrobactrum anthropi) protein is Pantothenate synthetase.